Consider the following 178-residue polypeptide: PRA1 family protein 2 (178 aa).

The Cytoplasmic segment spans residues 1–41; it reads MSEVRLPPLRALDDFVLGSARLAAPDPCDPQRWCHRVINNL. A helical membrane pass occupies residues 42–62; sequence LYYQTNYLLCFGIGLALAGYV. The Extracellular segment spans residues 63–64; sequence RP. A helical membrane pass occupies residues 65–85; it reads LHTLLSALVVAVALGMLVWAA. Topologically, residues 86–96 are cytoplasmic; that stretch reads ETRAAVRRCRR. The helical transmembrane segment at 97-119 threads the bilayer; it reads SHPAACLAAVLAVGLLVLWVVGG. Topologically, residues 120 to 122 are extracellular; it reads ACT. A helical membrane pass occupies residues 123–140; the sequence is FLLSIAGPVLLILVHASL. The Cytoplasmic portion of the chain corresponds to 141 to 178; sequence RLRNLKNKIENKIESIGLKRTPMGLLLEALGQEQEAGS.

The protein belongs to the PRA1 family. In terms of assembly, interacts with CCR5 and GDE1.

Its subcellular location is the endosome membrane. May be involved in ER/Golgi transport and vesicular traffic. Plays a proapoptotic role in cerulenin-induced neuroblastoma apoptosis. This chain is PRA1 family protein 2 (PRAF2), found in Macaca fascicularis (Crab-eating macaque).